A 115-amino-acid chain; its full sequence is C-type natriuretic peptide prohormone (115 aa).

Residues 24–49 form a disordered region; that stretch reads PSDELNNEAEEMSPAASLPELNADQS. A disulfide bridge connects residues Cys-99 and Cys-115.

Belongs to the natriuretic peptide family. As to expression, CNP-115 is differentially processed to produce CNP-38 and CNP-39 in the heart and CNP-22 in the brain.

It localises to the secreted. In terms of biological role, hormone which may be vasoactive and natriuretic. Has a cGMP-stimulating activity. The sequence is that of C-type natriuretic peptide prohormone from Scyliorhinus canicula (Small-spotted catshark).